The sequence spans 1067 residues: Protein CLEC16A homolog (1067 aa).

Residues 50 to 199 (LRCIAEILIW…AVRTISLNVY (150 aa)) form the FPL domain. The chain crosses the membrane as a helical span at residues 333-353 (SIVALFLLSLVFLVVSHAPLV). A compositionally biased stretch (low complexity) spans 409–418 (SSSSYALSED). Disordered regions lie at residues 409 to 434 (SSSS…LDSQ), 837 to 861 (ASSS…PMFS), 876 to 993 (SNSA…SRSH), and 1037 to 1067 (QSSE…IETV). Residues 421 to 432 (VESSSPATTELD) are compositionally biased toward polar residues. A compositionally biased stretch (polar residues) spans 876–888 (SNSAGVSRTQMAP). The span at 917–926 (RADHSDRERS) shows a compositional bias: basic and acidic residues. Low complexity predominate over residues 927 to 947 (PSVSMGSHSSSQSRENSQPRS). Positions 951-974 (RSRESSPRMPRPRSEEIPLEDFQH) are enriched in basic and acidic residues. Residues 975–993 (SRNNSPHSRGNPSPASRSH) are compositionally biased toward polar residues. Over residues 1057 to 1067 (EGRRRGAIETV) the composition is skewed to basic and acidic residues.

The protein belongs to the CLEC16A/gop-1 family. Interacts with the class C Vps-HOPS complex components; Car, Dor and Vps16a.

The protein localises to the cytoplasmic vesicle. It is found in the autophagosome membrane. Its subcellular location is the late endosome membrane. It localises to the golgi apparatus membrane. Its function is as follows. Required for mitophagy, autophagy and endosome maturation, possibly by acting in multiple membrane trafficking pathways. Required for endosome trafficking and maturation. Functions with the class C Vps-HOPS complex member Vps16a to promote endosomal maturation into degradative late endosomes and lysosomes. In response to starvation, functions at an early stage of autophagy to promote autophagosome growth and efficient autophagy. Essential for the recruitment of lva-positive Golgi elements to autophagosomes. Likely to function by promoting membrane traffic from the Golgi complex to the developing autophagosomes. Also regulates synaptic growth at the neuromuscular junctions (NMJ) by down-regulating BMP signaling. This Drosophila melanogaster (Fruit fly) protein is Protein CLEC16A homolog.